The primary structure comprises 527 residues: Eukaryotic translation initiation factor 3 subunit D (527 aa).

The segment at 100-136 is disordered; sequence QQNKRGGSNAGGRGGRGGMRGGRFGSNNKYWNDRRQR. Gly residues predominate over residues 107 to 123; the sequence is SNAGGRGGRGGMRGGRF. The segment at 264–277 is RNA gate; the sequence is SEHLTVNENLTAHH. The disordered stretch occupies residues 503-527; the sequence is DQIEEETQEEEEEEQSKGWVEESRE. Over residues 504–516 the composition is skewed to acidic residues; that stretch reads QIEEETQEEEEEE. A compositionally biased stretch (basic and acidic residues) spans 517 to 527; that stretch reads QSKGWVEESRE.

This sequence belongs to the eIF-3 subunit D family. Component of the eukaryotic translation initiation factor 3 (eIF-3) complex.

It is found in the cytoplasm. In terms of biological role, mRNA cap-binding component of the eukaryotic translation initiation factor 3 (eIF-3) complex, which is involved in protein synthesis of a specialized repertoire of mRNAs and, together with other initiation factors, stimulates binding of mRNA and methionyl-tRNAi to the 40S ribosome. The eIF-3 complex specifically targets and initiates translation of a subset of mRNAs involved in cell proliferation. In the eIF-3 complex, eif3d specifically recognizes and binds the 7-methylguanosine cap of a subset of mRNAs. This Dictyostelium discoideum (Social amoeba) protein is Eukaryotic translation initiation factor 3 subunit D (eif3d).